The chain runs to 270 residues: 27 kDa core protein (270 aa).

Belongs to the chordopoxvirinae D3 family.

The protein localises to the virion. In terms of biological role, late protein which is part of a large complex required for early virion morphogenesis. This complex participates in the formation of virosomes and the incorporation of virosomal contents into nascent immature virions. The polypeptide is 27 kDa core protein (Vertebrata (FPV)).